Here is a 276-residue protein sequence, read N- to C-terminus: UDP-3-O-acyl-N-acetylglucosamine deacetylase (276 aa).

Zn(2+) contacts are provided by H76, H234, and D238. The Proton donor role is filled by H261.

It belongs to the LpxC family. Zn(2+) is required as a cofactor.

The catalysed reaction is a UDP-3-O-[(3R)-3-hydroxyacyl]-N-acetyl-alpha-D-glucosamine + H2O = a UDP-3-O-[(3R)-3-hydroxyacyl]-alpha-D-glucosamine + acetate. It functions in the pathway glycolipid biosynthesis; lipid IV(A) biosynthesis; lipid IV(A) from (3R)-3-hydroxytetradecanoyl-[acyl-carrier-protein] and UDP-N-acetyl-alpha-D-glucosamine: step 2/6. Functionally, catalyzes the hydrolysis of UDP-3-O-myristoyl-N-acetylglucosamine to form UDP-3-O-myristoylglucosamine and acetate, the committed step in lipid A biosynthesis. The chain is UDP-3-O-acyl-N-acetylglucosamine deacetylase from Synechocystis sp. (strain ATCC 27184 / PCC 6803 / Kazusa).